Reading from the N-terminus, the 299-residue chain is Cycloserine biosynthesis protein DcsG (299 aa).

Positions 92, 137, 144, 175, 176, and 178 each coordinate ATP. The ATP-grasp domain maps to 95–298 (LADLAAHGVP…FAQALAERLK (204 aa)). Catalysis depends on residues Arg-220 and Arg-254. Mg(2+)-binding residues include Glu-269 and Glu-271. Glu-271 is a catalytic residue.

Monomer. Requires Mg(2+) as cofactor.

It catalyses the reaction O-ureido-D-serine + ATP + H2O + H(+) = D-cycloserine + NH4(+) + ADP + phosphate + CO2. In terms of biological role, involved in the biosynthesis of the antibiotic D-cycloserine (DCS), a cyclic structural analog of D-alanine, used as an antitubercular agent. Catalyzes the synthesis of D-cycloserine from O-ureido-D-serine (D-OUS). It reacts with D-OUS, D-homocysteine and beta-aminooxy-D-alanine. This chain is Cycloserine biosynthesis protein DcsG, found in Streptomyces lavendulae.